The chain runs to 209 residues: N-(5'-phosphoribosyl)anthranilate isomerase (209 aa).

This sequence belongs to the TrpF family.

The enzyme catalyses N-(5-phospho-beta-D-ribosyl)anthranilate = 1-(2-carboxyphenylamino)-1-deoxy-D-ribulose 5-phosphate. Its pathway is amino-acid biosynthesis; L-tryptophan biosynthesis; L-tryptophan from chorismate: step 3/5. The chain is N-(5'-phosphoribosyl)anthranilate isomerase from Pelobacter propionicus (strain DSM 2379 / NBRC 103807 / OttBd1).